A 1331-amino-acid chain; its full sequence is DNA replication ATP-dependent helicase/nuclease JHS1 (1331 aa).

Residues 1–98 (MPPRKKPKSS…DMDQQLTEAS (98 aa)) are disordered. The Nuclear localization signal motif lies at 2-8 (PPRKKPK). The span at 11 to 31 (ALKSNKQSSANHSSQPSTFGI) shows a compositional bias: polar residues. Positions 40–52 (QNSQSTSNSHTST) are enriched in low complexity. Residues 57–81 (DQQNVNGLASDTAVLTPQNPLGTSN) show a composition bias toward polar residues. The segment covering 82 to 91 (EKPDESKDMD) has biased composition (basic and acidic residues). Positions 362-811 (ECALYLWDEW…CKLRTGDRVI (450 aa)) are nuclease activity. [4Fe-4S] cluster-binding residues include C422, C666, C669, and C675. Positions 812-1331 (LRTEVSHLTV…LNLLPGDLKP (520 aa)) are helicase activity. The UvrD-like helicase ATP-binding domain maps to 924–1271 (NNDQRQAILK…VRSREKPRSS (348 aa)). 945–952 (GMPGTGKT) provides a ligand contact to ATP.

This sequence belongs to the DNA2/NAM7 helicase family. [4Fe-4S] cluster is required as a cofactor. Strongly expressed in meristems, including both root and shoot apical meristems (RAM and SAM). Also present in the vasculature and in young floral tissues.

It is found in the nucleus. The protein localises to the chromosome. The enzyme catalyses ATP + H2O = ADP + phosphate + H(+). Functionally, essential protein required during embryogenesis. Key enzyme involved in DNA replication and damage repair, shoot apical meristem (SAM) maintenance, and development. Involved in Okazaki fragments processing. Possesses different enzymatic activities, such as single-stranded DNA (ssDNA)-dependent ATPase, 5'-3' helicase and endonuclease activities. While the ATPase and endonuclease activities are well-defined and play a key role in Okazaki fragments processing and DSB repair, the 5'-3' DNA helicase activity is atypical: it cannot load onto its tracking strand internally and has an absolute free 5'-end requirement. This Arabidopsis thaliana (Mouse-ear cress) protein is DNA replication ATP-dependent helicase/nuclease JHS1.